Reading from the N-terminus, the 258-residue chain is Ribosomal RNA small subunit methyltransferase A (258 aa).

S-adenosyl-L-methionine-binding residues include histidine 13, leucine 15, glycine 40, glutamate 61, aspartate 86, and asparagine 106.

The protein belongs to the class I-like SAM-binding methyltransferase superfamily. rRNA adenine N(6)-methyltransferase family. RsmA subfamily.

The protein localises to the cytoplasm. It carries out the reaction adenosine(1518)/adenosine(1519) in 16S rRNA + 4 S-adenosyl-L-methionine = N(6)-dimethyladenosine(1518)/N(6)-dimethyladenosine(1519) in 16S rRNA + 4 S-adenosyl-L-homocysteine + 4 H(+). In terms of biological role, specifically dimethylates two adjacent adenosines (A1518 and A1519) in the loop of a conserved hairpin near the 3'-end of 16S rRNA in the 30S particle. May play a critical role in biogenesis of 30S subunits. This Coxiella burnetii (strain Dugway 5J108-111) protein is Ribosomal RNA small subunit methyltransferase A.